Here is a 230-residue protein sequence, read N- to C-terminus: Large ribosomal subunit protein uL1 (230 aa).

Belongs to the universal ribosomal protein uL1 family. Part of the 50S ribosomal subunit.

Its function is as follows. Binds directly to 23S rRNA. The L1 stalk is quite mobile in the ribosome, and is involved in E site tRNA release. In terms of biological role, protein L1 is also a translational repressor protein, it controls the translation of the L11 operon by binding to its mRNA. The polypeptide is Large ribosomal subunit protein uL1 (Bifidobacterium adolescentis (strain ATCC 15703 / DSM 20083 / NCTC 11814 / E194a)).